The chain runs to 520 residues: General transcription factor 3C polypeptide 5 (520 aa).

N-acetylalanine is present on Ala2. Residues 466–520 (LFSNTGKADRGKEQLMFESGEEEEEEEEEEEEEEEDFKPSDGSENEMETEILDYV) form a disordered region. Composition is skewed to acidic residues over residues 484-501 (SGEE…EEED) and 508-520 (SENE…LDYV).

The protein belongs to the TFIIIC subunit 5 family. In terms of assembly, part of the TFIIIC subcomplex TFIIIC2, consisting of six subunits, GTF3C1, GTF3C2, GTF3C3, GTF3C4, GTF3C5 and GTF3C6. Interacts with BRF1, GTF3C6 and TBP.

Its subcellular location is the nucleus. Its function is as follows. Involved in RNA polymerase III-mediated transcription. Integral, tightly associated component of the DNA-binding TFIIIC2 subcomplex that directly binds tRNA and virus-associated RNA promoters. This Mus musculus (Mouse) protein is General transcription factor 3C polypeptide 5 (Gtf3c5).